A 242-amino-acid polypeptide reads, in one-letter code: DNA repair protein RecO (242 aa).

The protein belongs to the RecO family.

Functionally, involved in DNA repair and RecF pathway recombination. This is DNA repair protein RecO from Paracoccus denitrificans (strain Pd 1222).